The chain runs to 62 residues: Large ribosomal subunit protein bL33 (62 aa).

The protein belongs to the bacterial ribosomal protein bL33 family.

This Cyanothece sp. (strain PCC 7425 / ATCC 29141) protein is Large ribosomal subunit protein bL33.